Reading from the N-terminus, the 106-residue chain is SH3 domain-binding glutamic acid-rich-like protein 2-B (106 aa).

Residues Q61 to P67 carry the SH3-binding motif.

Belongs to the SH3BGR family.

It localises to the nucleus. The chain is SH3 domain-binding glutamic acid-rich-like protein 2-B (sh3bgrl2-b) from Xenopus laevis (African clawed frog).